Reading from the N-terminus, the 320-residue chain is Histidine decarboxylase proenzyme (320 aa).

Positions 2-11 are excised as a propeptide; it reads NKNLEANRNR. Residue Ser-98 is modified to Pyruvic acid (Ser). The active-site Proton donor is the Glu-215.

As to quaternary structure, the proenzyme is a hexamer of identical pi chains; each pi chain monomer is cleaved to form a small (or beta) chain and a large (or alpha) chain by non-hydrolytic self-catalysis. It depends on pyruvate as a cofactor.

It carries out the reaction L-histidine + H(+) = histamine + CO2. The chain is Histidine decarboxylase proenzyme (hdc) from Clostridium perfringens (strain ATCC 13124 / DSM 756 / JCM 1290 / NCIMB 6125 / NCTC 8237 / Type A).